The chain runs to 251 residues: Adenosylcobinamide-GDP ribazoletransferase (251 aa).

Helical transmembrane passes span 36–56, 60–80, 110–130, 141–161, 181–201, 202–222, and 231–251; these read LYPF…FVLS, VPIM…TGFL, VGAF…AGMF, VLIF…VSQE, EIIL…TLGI, NYLI…LKVK, and DVAG…LGII.

This sequence belongs to the CobS family. The cofactor is Mg(2+).

Its subcellular location is the cell membrane. The enzyme catalyses alpha-ribazole + adenosylcob(III)inamide-GDP = adenosylcob(III)alamin + GMP + H(+). The catalysed reaction is alpha-ribazole 5'-phosphate + adenosylcob(III)inamide-GDP = adenosylcob(III)alamin 5'-phosphate + GMP + H(+). It participates in cofactor biosynthesis; adenosylcobalamin biosynthesis; adenosylcobalamin from cob(II)yrinate a,c-diamide: step 7/7. Functionally, joins adenosylcobinamide-GDP and alpha-ribazole to generate adenosylcobalamin (Ado-cobalamin). Also synthesizes adenosylcobalamin 5'-phosphate from adenosylcobinamide-GDP and alpha-ribazole 5'-phosphate. The polypeptide is Adenosylcobinamide-GDP ribazoletransferase (Clostridium perfringens (strain 13 / Type A)).